The following is a 1025-amino-acid chain: AP-2 complex subunit alpha (1025 aa).

The tract at residues 713–737 (RSIMVPMPPPSRRNTIDDVNSKISS) is disordered. Thr-727 is modified (phosphothreonine). Ser-733 is modified (phosphoserine).

This sequence belongs to the adaptor complexes large subunit family. Adaptor protein complex 2 (AP-2) is a heterotetramer composed of two large adaptins (alpha-type subunit APL3 and beta-type subunit APL1), a medium chain (mu-type subunit APM4) and a small adaptin (sigma-type subunit APS2).

Its subcellular location is the cell membrane. It localises to the membrane. The protein localises to the coated pit. Functionally, adaptins are components of the adaptor complexes which link clathrin to receptors in coated vesicles. Clathrin-associated protein complexes are believed to interact with the cytoplasmic tails of membrane proteins, leading to their selection and concentration. Alpha adaptin is a subunit of the plasma membrane adaptor. Facilitates interaction between APL1 and APS2. The sequence is that of AP-2 complex subunit alpha (APL3) from Saccharomyces cerevisiae (strain ATCC 204508 / S288c) (Baker's yeast).